The sequence spans 355 residues: Adenine deaminase (355 aa).

3 residues coordinate Zn(2+): His24, His26, and His204. Residue Glu207 is the Proton donor of the active site. Residue Asp285 participates in Zn(2+) binding. Asp286 is a binding site for substrate.

The protein belongs to the metallo-dependent hydrolases superfamily. Adenosine and AMP deaminases family. Adenine deaminase type 2 subfamily. Zn(2+) is required as a cofactor.

The enzyme catalyses adenine + H2O + H(+) = hypoxanthine + NH4(+). In terms of biological role, catalyzes the hydrolytic deamination of adenine to hypoxanthine. Plays an important role in the purine salvage pathway and in nitrogen catabolism. The sequence is that of Adenine deaminase from Geotalea uraniireducens (strain Rf4) (Geobacter uraniireducens).